The chain runs to 439 residues: GTPase Der (439 aa).

EngA-type G domains lie at 3 to 167 (PTVA…DKVG) and 176 to 351 (IKVA…GNYT). GTP contacts are provided by residues 9–16 (GRPNVGKS), 56–60 (DTGGI), 119–122 (NKID), 182–189 (GKPNTGKS), 229–233 (DTAGL), and 294–297 (NKWD). Residues 352-436 (RRITTGQIND…PIVFLIREKG (85 aa)) form the KH-like domain.

Belongs to the TRAFAC class TrmE-Era-EngA-EngB-Septin-like GTPase superfamily. EngA (Der) GTPase family. Associates with the 50S ribosomal subunit.

Its function is as follows. GTPase that plays an essential role in the late steps of ribosome biogenesis. This is GTPase Der from Caldicellulosiruptor saccharolyticus (strain ATCC 43494 / DSM 8903 / Tp8T 6331).